We begin with the raw amino-acid sequence, 60 residues long: Large ribosomal subunit protein bL32 (60 aa).

Belongs to the bacterial ribosomal protein bL32 family.

The chain is Large ribosomal subunit protein bL32 from Hydrogenobaculum sp. (strain Y04AAS1).